Consider the following 123-residue polypeptide: Small ribosomal subunit protein uS13 (123 aa).

A disordered region spans residues 92-123 (RKGLPVRGQKTKTNARTRKGPKKLVGAKKKSK).

It belongs to the universal ribosomal protein uS13 family. Part of the 30S ribosomal subunit. Forms a loose heterodimer with protein S19. Forms two bridges to the 50S subunit in the 70S ribosome.

Functionally, located at the top of the head of the 30S subunit, it contacts several helices of the 16S rRNA. In the 70S ribosome it contacts the 23S rRNA (bridge B1a) and protein L5 of the 50S subunit (bridge B1b), connecting the 2 subunits; these bridges are implicated in subunit movement. Contacts the tRNAs in the A and P-sites. The polypeptide is Small ribosomal subunit protein uS13 (Clostridium kluyveri (strain NBRC 12016)).